The sequence spans 154 residues: 6,7-dimethyl-8-ribityllumazine synthase (154 aa).

5-amino-6-(D-ribitylamino)uracil is bound by residues F21, 55-57 (AFE), and 79-81 (CVI). Position 84–85 (84–85 (AT)) interacts with (2S)-2-hydroxy-3-oxobutyl phosphate. H87 acts as the Proton donor in catalysis. Position 112 (F112) interacts with 5-amino-6-(D-ribitylamino)uracil. R126 contacts (2S)-2-hydroxy-3-oxobutyl phosphate.

It belongs to the DMRL synthase family. In terms of assembly, forms an icosahedral capsid composed of 60 subunits, arranged as a dodecamer of pentamers.

The enzyme catalyses (2S)-2-hydroxy-3-oxobutyl phosphate + 5-amino-6-(D-ribitylamino)uracil = 6,7-dimethyl-8-(1-D-ribityl)lumazine + phosphate + 2 H2O + H(+). It participates in cofactor biosynthesis; riboflavin biosynthesis; riboflavin from 2-hydroxy-3-oxobutyl phosphate and 5-amino-6-(D-ribitylamino)uracil: step 1/2. Functionally, catalyzes the formation of 6,7-dimethyl-8-ribityllumazine by condensation of 5-amino-6-(D-ribitylamino)uracil with 3,4-dihydroxy-2-butanone 4-phosphate. This is the penultimate step in the biosynthesis of riboflavin. This is 6,7-dimethyl-8-ribityllumazine synthase from Staphylococcus aureus (strain Mu50 / ATCC 700699).